The sequence spans 531 residues: MDTLFRLVSLQQQQQSDSIITNQSSLSRTSTTTTGSPQTAYHYNFPQNDVVEECFNFFMDEEDLSSSSSHHNHHNHNNPNTYYSPFTTPTQYHPATSSTPSSTAAAAALASPYSSSGHHNDPSAFSIPQTPPSFDFSANAKWADSVLLEAARAFSDKDTARAQQILWTLNELSSPYGDTEQKLASYFLQALFNRMTGSGERCYRTMVTAAATEKTCSFESTRKTVLKFQEVSPWATFGHVAANGAILEAVDGEAKIHIVDISSTFCTQWPTLLEALATRSDDTPHLRLTTVVVANKFVNDQTASHRMMKEIGNRMEKFARLMGVPFKFNIIHHVGDLSEFDLNELDVKPDEVLAINCVGAMHGIASRGSPRDAVISSFRRLRPRIVTVVEEEADLVGEEEGGFDDEFLRGFGECLRWFRVCFESWEESFPRTSNERLMLERAAGRAIVDLVACEPSDSTERRETARKWSRRMRNSGFGAVGYSDEVADDVRALLRRYKEGVWSMVQCPDAAGIFLCWRDQPVVWASAWRPT.

Positions 14–39 (QQSDSIITNQSSLSRTSTTTTGSPQT) are enriched in low complexity. Disordered regions lie at residues 14-40 (QQSD…PQTA) and 65-103 (SSSS…PSST). The segment covering 81–93 (TYYSPFTTPTQYH) has biased composition (polar residues). Residues 94–103 (PATSSTPSST) are compositionally biased toward low complexity. Positions 134 to 529 (FDFSANAKWA…QPVVWASAWR (396 aa)) constitute a GRAS domain. A leucine repeat I (LRI) region spans residues 141–206 (KWADSVLLEA…GSGERCYRTM (66 aa)). Residues 225-290 (VLKFQEVSPW…DDTPHLRLTT (66 aa)) are VHIID. The VHIID motif lies at 256-260 (IHIVD). A leucine repeat II (LRII) region spans residues 310-343 (EIGNRMEKFARLMGVPFKFNIIHHVGDLSEFDLN). Residues 353-449 (LAINCVGAMH…ERAAGRAIVD (97 aa)) form a PFYRE region. The interval 452-529 (ACEPSDSTER…QPVVWASAWR (78 aa)) is SAW.

The protein belongs to the GRAS family. As to quaternary structure, interacts with SCR, SCL23, JKD and MGP. Interacts with SIEL. Association to endosomes and intercellular movement of SHR rely on the interaction with SIEL. Expressed in the stele and the quiescent center. Not detected in the ground tissue cell lineage. The SHR protein moves from the stele to a single layer of adjacent cells, where it enters the nucleus.

The protein localises to the cytoplasm. Its subcellular location is the nucleus. It localises to the early endosome. The protein resides in the late endosome. It is found in the recycling endosome. Functionally, transcription factor required for quiescent center cells specification and maintenance of surrounding stem cells, and for the asymmetric cell division involved in radial pattern formation in roots. Essential for both cell division and cell specification. Regulates the radial organization of the shoot axial organs and is required for normal shoot gravitropism. Directly controls the transcription of SCR, and when associated with SCR, of MGP, RLK, TRI, NUC and SCL3. The chain is Protein SHORT-ROOT from Arabidopsis thaliana (Mouse-ear cress).